The sequence spans 541 residues: Imidazole glycerol phosphate synthase hisHF (541 aa).

Positions 2-214 (IVSIVDYGSG…LTGNYEQPIS (213 aa)) constitute a Glutamine amidotransferase type-1 domain. Catalysis depends on for GATase activity residues Cys-80, His-189, and Glu-191. The segment at 228–541 (LTKRIIACLD…LAIHDVLVRT (314 aa)) is cyclase. Active-site residues include Asp-237 and Asp-396.

It in the C-terminal section; belongs to the HisA/HisF family.

The catalysed reaction is 5-[(5-phospho-1-deoxy-D-ribulos-1-ylimino)methylamino]-1-(5-phospho-beta-D-ribosyl)imidazole-4-carboxamide + L-glutamine = D-erythro-1-(imidazol-4-yl)glycerol 3-phosphate + 5-amino-1-(5-phospho-beta-D-ribosyl)imidazole-4-carboxamide + L-glutamate + H(+). It catalyses the reaction L-glutamine + H2O = L-glutamate + NH4(+). It functions in the pathway amino-acid biosynthesis; L-histidine biosynthesis; L-histidine from 5-phospho-alpha-D-ribose 1-diphosphate: step 5/9. IGPS catalyzes the conversion of PRFAR and glutamine to IGP, AICAR and glutamate. The glutaminase domain produces the ammonia necessary for the cyclase domain to produce IGP and AICAR from PRFAR. The ammonia is channeled to the active site of the cyclase domain. This Schizosaccharomyces pombe (strain 972 / ATCC 24843) (Fission yeast) protein is Imidazole glycerol phosphate synthase hisHF (his4).